Consider the following 212-residue polypeptide: Nitrogen regulatory protein P-II homolog (212 aa).

Composition is skewed to low complexity over residues Met1 to Ala12, Thr32 to Arg46, and Pro63 to Ala74. Residues Met1–Arg68 constitute a chloroplast transit peptide. The disordered stretch occupies residues Met1–Ala74. ATP is bound by residues Gly117–Gln121 and Gly170–Lys173. Gly119 contacts Mg(2+).

This sequence belongs to the P(II) protein family. In terms of assembly, homodimer.

The protein localises to the plastid. It localises to the chloroplast. In terms of biological role, participates in sensing carbon and organic nitrogen status and regulates some steps of primary carbon and nitrogen metabolism. This chain is Nitrogen regulatory protein P-II homolog (GLB), found in Oryza sativa subsp. japonica (Rice).